The sequence spans 362 residues: Protein RecA (362 aa).

Position 77–84 (77–84 (GPESSGKT)) interacts with ATP.

This sequence belongs to the RecA family.

The protein resides in the cytoplasm. Functionally, can catalyze the hydrolysis of ATP in the presence of single-stranded DNA, the ATP-dependent uptake of single-stranded DNA by duplex DNA, and the ATP-dependent hybridization of homologous single-stranded DNAs. It interacts with LexA causing its activation and leading to its autocatalytic cleavage. The sequence is that of Protein RecA from Rhizobium leguminosarum bv. trifolii (strain WSM2304).